Consider the following 111-residue polypeptide: MKKQNIRVGDKVFILAGNDKGKEGKVLSLTEDKVVVEGVNVRIKNIKRSQQNPKGKRISIEAPIHISNVRLTIAGEPAKLSVKVTEQGRELWQRRPDGTSQLYRLVRGKKG.

This sequence belongs to the universal ribosomal protein uL24 family. As to quaternary structure, part of the 50S ribosomal subunit.

Functionally, one of two assembly initiator proteins, it binds directly to the 5'-end of the 23S rRNA, where it nucleates assembly of the 50S subunit. In terms of biological role, one of the proteins that surrounds the polypeptide exit tunnel on the outside of the subunit. The polypeptide is Large ribosomal subunit protein uL24 (Chlamydia pneumoniae (Chlamydophila pneumoniae)).